The sequence spans 100 residues: Small ribosomal subunit protein bS6 (100 aa).

The protein belongs to the bacterial ribosomal protein bS6 family.

Binds together with bS18 to 16S ribosomal RNA. This is Small ribosomal subunit protein bS6 from Tropheryma whipplei (strain TW08/27) (Whipple's bacillus).